We begin with the raw amino-acid sequence, 111 residues long: WAP four-disulfide core domain protein 12 (111 aa).

Positions 1-23 (MGSSSFLVLMVSLALVTLVAAEG) are cleaved as a signal peptide. One can recognise a WAP domain in the interval 27 to 74 (NIEKPGVCPADNIRCIKSDPPQCHTDQDCQGIRKCCYLHCGFKCVIPV). 4 disulfide bridges follow: cysteine 34-cysteine 62, cysteine 41-cysteine 66, cysteine 49-cysteine 61, and cysteine 55-cysteine 70. The interval 80–111 (GGNKDEDVSRPCPEPGWEAKPPGVFSTRCPQK) is disordered.

The protein resides in the secreted. Antibacterial protein. Putative acid-stable proteinase inhibitor. This chain is WAP four-disulfide core domain protein 12 (WFDC12), found in Callithrix jacchus (White-tufted-ear marmoset).